An 82-amino-acid polypeptide reads, in one-letter code: MKQIFLLFTLLFITSACSKKLKETLGLSTSGPNEYQVQRVKTLEAPPHYYLIDPRSNKTTYNNIKGKHELNEGEQALMHDMH.

This is an uncharacterized protein from Rickettsia prowazekii (strain Madrid E).